Consider the following 203-residue polypeptide: Glycerol-3-phosphate acyltransferase (203 aa).

Helical transmembrane passes span 12-32 (ATLL…GLIL), 66-86 (TLLL…LWGV), 88-108 (AGIA…WLSF), 118-138 (IGVL…IWLA), and 159-179 (IALY…MTVI).

Belongs to the PlsY family. As to quaternary structure, probably interacts with PlsX.

It localises to the cell inner membrane. It carries out the reaction an acyl phosphate + sn-glycerol 3-phosphate = a 1-acyl-sn-glycero-3-phosphate + phosphate. Its pathway is lipid metabolism; phospholipid metabolism. Functionally, catalyzes the transfer of an acyl group from acyl-phosphate (acyl-PO(4)) to glycerol-3-phosphate (G3P) to form lysophosphatidic acid (LPA). This enzyme utilizes acyl-phosphate as fatty acyl donor, but not acyl-CoA or acyl-ACP. The polypeptide is Glycerol-3-phosphate acyltransferase (Sinorhizobium fredii (strain NBRC 101917 / NGR234)).